Reading from the N-terminus, the 153-residue chain is Large ribosomal subunit protein uL30 (153 aa).

The protein belongs to the universal ribosomal protein uL30 family. As to quaternary structure, part of the 50S ribosomal subunit.

The chain is Large ribosomal subunit protein uL30 from Methanospirillum hungatei JF-1 (strain ATCC 27890 / DSM 864 / NBRC 100397 / JF-1).